A 257-amino-acid chain; its full sequence is Thioredoxin-dependent peroxide reductase, mitochondrial (257 aa).

The transit peptide at Met-1 to His-62 directs the protein to the mitochondrion. Residues Pro-64–Phe-222 enclose the Thioredoxin domain. An N6-succinyllysine modification is found at Lys-84. Lys-92 carries the post-translational modification N6-acetyllysine; alternate. Lys-92 carries the post-translational modification N6-succinyllysine; alternate. The Cysteine sulfenic acid (-SOH) intermediate role is filled by Cys-109. Thr-147 carries the phosphothreonine modification.

The protein belongs to the peroxiredoxin family. AhpC/Prx1 subfamily. As to quaternary structure, homodimer; disulfide-linked, upon oxidation. 6 homodimers assemble to form a ring-like dodecamer. Interacts with NEK6. Interacts with LRRK2. Interacts with MAP3K13. Interacts with RPS6KC1 (via PX domain). In terms of processing, phosphorylated by LRRK2; phosphorylation reduces perodixase activity. The enzyme can be inactivated by further oxidation of the cysteine sulfenic acid (C(P)-SOH) to sulphinic acid (C(P)-SO2H) and sulphonic acid (C(P)-SO3H) instead of its condensation to a disulfide bond. Post-translationally, S-palmitoylated. In terms of tissue distribution, housekeeping-type gene preferentially expressed in murine erythroleukemia (MEL) cells.

It is found in the mitochondrion. It localises to the cytoplasm. The protein localises to the early endosome. It carries out the reaction a hydroperoxide + [thioredoxin]-dithiol = an alcohol + [thioredoxin]-disulfide + H2O. Functionally, thiol-specific peroxidase that catalyzes the reduction of hydrogen peroxide and organic hydroperoxides to water and alcohols, respectively. Plays a role in cell protection against oxidative stress by detoxifying peroxides. Acts synergistically with MAP3K13 to regulate the activation of NF-kappa-B in the cytosol. Required for the maintenance of physical strength. In Mus musculus (Mouse), this protein is Thioredoxin-dependent peroxide reductase, mitochondrial (Prdx3).